We begin with the raw amino-acid sequence, 37 residues long: Large ribosomal subunit protein bL36 (37 aa).

This sequence belongs to the bacterial ribosomal protein bL36 family.

The sequence is that of Large ribosomal subunit protein bL36 from Koribacter versatilis (strain Ellin345).